We begin with the raw amino-acid sequence, 145 residues long: Class I hydrophobin 1 (145 aa).

The first 19 residues, 1 to 19, serve as a signal peptide directing secretion; that stretch reads MKFSYAIAAVVAAAASVQA. Disulfide bonds link Cys-65-Cys-126, Cys-72-Cys-120, Cys-73-Cys-106, and Cys-127-Cys-140. N-linked (GlcNAc...) asparagine glycosylation is found at Asn-80 and Asn-129.

This sequence belongs to the fungal hydrophobin family. In terms of assembly, self-assembles to form functional amyloid fibrils called rodlets. Self-assembly into fibrillar rodlets occurs spontaneously at hydrophobic:hydrophilic interfaces and the rodlets further associate laterally to form amphipathic monolayers.

It is found in the secreted. The protein localises to the cell wall. Its function is as follows. Aerial growth, conidiation, and dispersal of filamentous fungi in the environment rely upon a capability of their secreting small amphipathic proteins called hydrophobins (HPBs) with low sequence identity. Class I can self-assemble into an outermost layer of rodlet bundles on aerial cell surfaces, conferring cellular hydrophobicity that supports fungal growth, development and dispersal; whereas Class II form highly ordered films at water-air interfaces through intermolecular interactions but contribute nothing to the rodlet structure. Hyd1 is a class I hydrophobin that is crucial for the initiation of primordia formation. Plays also important roles in nitrogen regulation and resistance to abiotic stresses. The polypeptide is Class I hydrophobin 1 (Ganoderma lucidum (Ling zhi medicinal fungus)).